The chain runs to 601 residues: Glutathione-regulated potassium-efflux system protein KefB (601 aa).

13 helical membrane passes run 4-24 (ADLLTAGVLFLFAAVAAVPLA), 29-49 (IGAVLGYLLAGIAIGPWGLGF), 55-75 (EILHFSELGVVFLMFIIGLEL), 87-107 (IFGVGAAQVLLSAAVLAGLLM), 111-131 (FLWQAAVVGGIGLAMSSTAMA), 152-172 (VLLFQDLAVIPALALVPLLAG), 177-197 (HFDWFKVAMKVLAFAVMLIGG), 207-227 (FIAASGVREVFTAATLLLVLS), 230-250 (LFMDALGLSMALGTFIAGVLL), 262-282 (AIDPFKGLLLGLFFISVGMSL), 284-304 (LGVLYTHLLWVAASVVILVVI), 324-344 (MQFASVLSQGGEFAFVLFSTA), and 356-376 (ALLLVTVTLSMMTTPLLMKGI). Residues 400-519 (KPQVIVVGFG…AGVTQFSRET (120 aa)) form the RCK N-terminal domain.

This sequence belongs to the monovalent cation:proton antiporter 2 (CPA2) transporter (TC 2.A.37) family. KefB subfamily. Interacts with the regulatory subunit KefG.

It localises to the cell inner membrane. Pore-forming subunit of a potassium efflux system that confers protection against electrophiles. Catalyzes K(+)/H(+) antiport. The sequence is that of Glutathione-regulated potassium-efflux system protein KefB from Salmonella heidelberg (strain SL476).